We begin with the raw amino-acid sequence, 417 residues long: UPF0597 protein Cphy_1256 (417 aa).

The protein belongs to the UPF0597 family.

The protein is UPF0597 protein Cphy_1256 of Lachnoclostridium phytofermentans (strain ATCC 700394 / DSM 18823 / ISDg) (Clostridium phytofermentans).